Consider the following 351-residue polypeptide: Xaa-Pro dipeptidase (351 aa).

Asp-212, Asp-223, His-287, Glu-316, and Glu-330 together coordinate Co(2+).

This sequence belongs to the peptidase M24B family. Archaeal-type prolidase subfamily. As to quaternary structure, homodimer. The cofactor is Co(2+).

The protein localises to the cytoplasm. It catalyses the reaction Xaa-L-Pro dipeptide + H2O = an L-alpha-amino acid + L-proline. Splits dipeptides with a prolyl in the C-terminal position and a nonpolar amino acid at the N-terminal position. The chain is Xaa-Pro dipeptidase (pepQ) from Pyrococcus horikoshii (strain ATCC 700860 / DSM 12428 / JCM 9974 / NBRC 100139 / OT-3).